We begin with the raw amino-acid sequence, 268 residues long: Probable intron-encoded DNA endonuclease 1 (268 aa).

Belongs to the LAGLIDADG endonuclease family.

The protein localises to the mitochondrion. Mitochondrial DNA endonuclease involved in intron homing. The protein is Probable intron-encoded DNA endonuclease 1 (hegI1) of Mycosarcoma maydis (Corn smut fungus).